The sequence spans 245 residues: MSAAVVTVRGLRRAFGAQQVLDALDLDIADGEFVAMLGLSGSGKSTLLRILAGLDHQADGSVVVPRSRAVVFQNPRLLPWRRALANVTFALADAGPDAPSRTARGRAALDEVGLADKADAWPLSLSGGEAQRVSLARALVREPDLLLLDEPFGALDALTRLKMYRLLHDLWARRHMAVLHVTHDVDEAILLADRVVVLSDGRVSLDRRVDLPFPRSRGDEGFDDLRRVLLAELGVREEVGHDRGR.

An ABC transporter domain is found at 6–225 (VTVRGLRRAF…SRGDEGFDDL (220 aa)). 38–45 (GLSGSGKS) is a binding site for ATP.

The protein belongs to the ABC transporter superfamily. Aliphatic sulfonates importer (TC 3.A.1.17.2) family. The complex is composed of two ATP-binding proteins (SsuB), two transmembrane proteins (SsuC) and a solute-binding protein (SsuA).

It localises to the cell membrane. It carries out the reaction ATP + H2O + aliphatic sulfonate-[sulfonate-binding protein]Side 1 = ADP + phosphate + aliphatic sulfonateSide 2 + [sulfonate-binding protein]Side 1.. Its function is as follows. Part of the ABC transporter complex SsuABC involved in aliphatic sulfonates import. Responsible for energy coupling to the transport system. This Mycobacterium sp. (strain MCS) protein is Aliphatic sulfonates import ATP-binding protein SsuB.